The primary structure comprises 338 residues: Glycerol-3-phosphate dehydrogenase [NAD(P)+] (338 aa).

Residues Ser13, Trp14, and Lys108 each contribute to the NADPH site. 3 residues coordinate sn-glycerol 3-phosphate: Lys108, Gly139, and Ser141. Ala143 provides a ligand contact to NADPH. Residues Lys194, Asp247, Ser257, Arg258, and Asn259 each coordinate sn-glycerol 3-phosphate. Lys194 serves as the catalytic Proton acceptor. NADPH is bound at residue Arg258. Residues Val282 and Glu284 each coordinate NADPH.

This sequence belongs to the NAD-dependent glycerol-3-phosphate dehydrogenase family.

Its subcellular location is the cytoplasm. It catalyses the reaction sn-glycerol 3-phosphate + NAD(+) = dihydroxyacetone phosphate + NADH + H(+). The enzyme catalyses sn-glycerol 3-phosphate + NADP(+) = dihydroxyacetone phosphate + NADPH + H(+). It functions in the pathway membrane lipid metabolism; glycerophospholipid metabolism. Functionally, catalyzes the reduction of the glycolytic intermediate dihydroxyacetone phosphate (DHAP) to sn-glycerol 3-phosphate (G3P), the key precursor for phospholipid synthesis. In Streptococcus pyogenes serotype M12 (strain MGAS9429), this protein is Glycerol-3-phosphate dehydrogenase [NAD(P)+].